The primary structure comprises 64 residues: DNA gyrase inhibitor YacG (64 aa).

Cys10, Cys13, Cys29, and Cys33 together coordinate Zn(2+).

This sequence belongs to the DNA gyrase inhibitor YacG family. In terms of assembly, interacts with GyrB. Requires Zn(2+) as cofactor.

In terms of biological role, inhibits all the catalytic activities of DNA gyrase by preventing its interaction with DNA. Acts by binding directly to the C-terminal domain of GyrB, which probably disrupts DNA binding by the gyrase. This chain is DNA gyrase inhibitor YacG, found in Pectobacterium atrosepticum (strain SCRI 1043 / ATCC BAA-672) (Erwinia carotovora subsp. atroseptica).